A 272-amino-acid polypeptide reads, in one-letter code: 2-dehydro-3-deoxyphosphooctonate aldolase (272 aa).

It belongs to the KdsA family.

The protein localises to the cytoplasm. It catalyses the reaction D-arabinose 5-phosphate + phosphoenolpyruvate + H2O = 3-deoxy-alpha-D-manno-2-octulosonate-8-phosphate + phosphate. It participates in carbohydrate biosynthesis; 3-deoxy-D-manno-octulosonate biosynthesis; 3-deoxy-D-manno-octulosonate from D-ribulose 5-phosphate: step 2/3. Its pathway is bacterial outer membrane biogenesis; lipopolysaccharide biosynthesis. This Geotalea daltonii (strain DSM 22248 / JCM 15807 / FRC-32) (Geobacter daltonii) protein is 2-dehydro-3-deoxyphosphooctonate aldolase.